The sequence spans 110 residues: N(4)-acetylcytidine amidohydrolase (110 aa).

The ASCH domain occupies 6–93; sequence TFFERFEQDI…IQEIYPGLEQ (88 aa). The active-site Proton acceptor is the K20. The active-site Nucleophile is the T23. The active-site Proton donor is the E73.

It belongs to the N(4)-acetylcytidine amidohydrolase family.

It carries out the reaction N(4)-acetylcytidine + H2O = cytidine + acetate + H(+). The catalysed reaction is N(4)-acetyl-2'-deoxycytidine + H2O = 2'-deoxycytidine + acetate + H(+). The enzyme catalyses N(4)-acetylcytosine + H2O = cytosine + acetate + H(+). Its function is as follows. Catalyzes the hydrolysis of N(4)-acetylcytidine (ac4C). The chain is N(4)-acetylcytidine amidohydrolase from Shewanella sp. (strain ANA-3).